The chain runs to 709 residues: Polyribonucleotide nucleotidyltransferase (709 aa).

Mg(2+) contacts are provided by Asp-485 and Asp-491. In terms of domain architecture, KH spans 552–611; sequence PRIYTMKIDPKKIKDVIGKGGATIRSLTEETGTSIDIDDDGTVKIAAVDSNAAKNVMGRI. One can recognise an S1 motif domain in the interval 621–689; sequence GAIYKGKVTR…RQGRIRLTMK (69 aa).

The protein belongs to the polyribonucleotide nucleotidyltransferase family. Component of the RNA degradosome, which is a multiprotein complex involved in RNA processing and mRNA degradation. Mg(2+) serves as cofactor.

It localises to the cytoplasm. The enzyme catalyses RNA(n+1) + phosphate = RNA(n) + a ribonucleoside 5'-diphosphate. Its function is as follows. Involved in mRNA degradation. Catalyzes the phosphorolysis of single-stranded polyribonucleotides processively in the 3'- to 5'-direction. This chain is Polyribonucleotide nucleotidyltransferase, found in Haemophilus influenzae (strain PittEE).